A 428-amino-acid polypeptide reads, in one-letter code: 3-phosphoshikimate 1-carboxyvinyltransferase (428 aa).

Lys23, Ser24, and Arg28 together coordinate 3-phosphoshikimate. Position 23 (Lys23) interacts with phosphoenolpyruvate. Residues Gly97 and Arg125 each contribute to the phosphoenolpyruvate site. Residues Ser170, Ser171, Gln172, Ser198, Asp314, Asn338, and Lys342 each contribute to the 3-phosphoshikimate site. Gln172 provides a ligand contact to phosphoenolpyruvate. Asp314 acts as the Proton acceptor in catalysis. Residues Arg346, Arg388, and Lys413 each contribute to the phosphoenolpyruvate site.

It belongs to the EPSP synthase family. As to quaternary structure, monomer.

The protein resides in the cytoplasm. It carries out the reaction 3-phosphoshikimate + phosphoenolpyruvate = 5-O-(1-carboxyvinyl)-3-phosphoshikimate + phosphate. The protein operates within metabolic intermediate biosynthesis; chorismate biosynthesis; chorismate from D-erythrose 4-phosphate and phosphoenolpyruvate: step 6/7. Its function is as follows. Catalyzes the transfer of the enolpyruvyl moiety of phosphoenolpyruvate (PEP) to the 5-hydroxyl of shikimate-3-phosphate (S3P) to produce enolpyruvyl shikimate-3-phosphate and inorganic phosphate. This chain is 3-phosphoshikimate 1-carboxyvinyltransferase, found in Baumannia cicadellinicola subsp. Homalodisca coagulata.